Here is a 504-residue protein sequence, read N- to C-terminus: MCVESDGCEIEGCSSSDEVHTLSGSMSPALKSRDLHHCRPGQKFHAALLRCRTPLVAAGILSFGNVLNYMDRYTVAGVLLDIQKQFKVGDSSAGLLQTVFICSFMVAAPIFGYLGDRFNRKIILSCGIFFWSAVTLLSSFITKEYYWLLVLSRCLVGIGESSYSSISPTIIGDLFTNNKRTVMLSVFYLAIPLGSGLGYILGSIAKDAGGHWYWALRVSPMLGLTAGTLILIFVSEPKRGSADQPGGRLKTRTSWVCDMKALAKNRSYVFSSLASAAVSFATGAFGIWIPQYLVRAQVVQKSAESCTYQPCSSRDSLIFGAITCVTGLLGVVIGAVTTRLCRQKTERADPLVCAVSMLGSAIFICLIFVVAKKSIVGAYICIFIGETLLFLNWAITADILMYVVIPTRRATAVAFQGFTSHLLGDAGSPYLIGLISDSLQESYATSEIWQFLSLGYALMLCPFVIVLGGMFFLATALFFLDDRDKAAKQVNQLARPPSTVKVTK.

The next 11 helical transmembrane spans lie at 48 to 70 (LLRC…LNYM), 94 to 114 (GLLQ…FGYL), 122 to 142 (IILS…SFIT), 182 to 202 (VMLS…YILG), 214 to 234 (WALR…LIFV), 269 to 289 (VFSS…GIWI), 317 to 337 (LIFG…GAVT), 351 to 371 (LVCA…FVVA), 375 to 395 (IVGA…NWAI), 415 to 435 (FQGF…IGLI), and 460 to 480 (LCPF…LFFL).

The protein belongs to the major facilitator superfamily. Spinster (TC 2.A.1.49) family.

The protein resides in the cell membrane. The protein localises to the endosome membrane. The catalysed reaction is sphing-4-enine 1-phosphate(in) = sphing-4-enine 1-phosphate(out). The enzyme catalyses sphinganine 1-phosphate(in) = sphinganine 1-phosphate(out). Functionally, lipid transporter that specifically mediates export of sphingosine-1-phosphate (sphing-4-enine 1-phosphate, S1P) and sphinganine-1-phosphate, which play critical roles in regulating heart development. Mediates the export of S1P from cells in the extraembryonic yolk syncytial layer (YSL), thereby regulating myocardial precursor migration. This chain is Sphingosine-1-phosphate transporter SPNS2, found in Danio rerio (Zebrafish).